The chain runs to 444 residues: MDSGMRATCTVPEHFLPRKLSKQNLDRFIPNRSAKDFDFANYALTQGSKRNLDEVTSASRKAYMTQLAVVMNQNRTRILAFRNKPKSLLSTNHSDSPHQNPKPVKPRRYIPQNSERVLDAPGLRDDFSLNLLDWGSANVLAIALGDTVYLWDASSGSTSELVTIDEDKGPVTSINWTQDGLDLAVGLDNSEVQLWDCVSNRQVRTLRGGHESRVGSLAWDNHILTTGGMDGKIVNNDVRIRSSIVETYLGHTEEVCGLKWSESGNKQASGGNDNVVHIWDRSLASSKQTRQWLHRFEEHTAAVRALAWCPFQASLLATGGGVGDGKIKFWNTHTGACLNSVETGSQVCSLLWSQSERELLSSHGFTQNQLTLWKYPSMSKMAELNGHTSRVLFMAQSPNGCTVASAAGDENLRLWNVFGEPPKTTKKAASKKYPELFSHVNSLR.

Residues 88 to 99 (LLSTNHSDSPHQ) are compositionally biased toward polar residues. A disordered region spans residues 88–108 (LLSTNHSDSPHQNPKPVKPRR). WD repeat units follow at residues 124–161 (RDDFSLNLLDWGSANVLAIALGDTVYLWDASSGSTSEL), 166–205 (EDKGPVTSINWTQDGLDLAVGLDNSEVQLWDCVSNRQVRT), 209–246 (GHESRVGSLAWDNHILTTGGMDGKIVNNDVRIRSSIVE), 250–289 (GHTEEVCGLKWSESGNKQASGGNDNVVHIWDRSLASSKQT), 298–340 (EHTA…CLNS), 342–383 (ETGS…KMAE), and 386–425 (GHTSRVLFMAQSPNGCTVASAAGDENLRLWNVFGEPPKTT).

This sequence belongs to the WD repeat CDC20/Fizzy family. In terms of assembly, the APC/C is composed of at least 11 subunits that stay tightly associated throughout the cell cycle.

It is found in the cytoplasm. It participates in protein modification; protein ubiquitination. Component of the anaphase promoting complex/cyclosome (APC/C), a cell cycle-regulated E3 ubiquitin-protein ligase complex that controls progression through mitosis and the G1 phase of the cell cycle. The sequence is that of Cell division cycle 20.4, cofactor of APC complex (CDC20-4) from Arabidopsis thaliana (Mouse-ear cress).